The chain runs to 725 residues: Exocyst complex component 8 (725 aa).

The residue at position 19 (serine 19) is a Phosphoserine. Positions 116-159 (AASGGEEGGGGAGGRDQLRGQTGFFPSPGGASRDGSGPGEEGKQ) are disordered. Positions 120–129 (GEEGGGGAGG) are enriched in gly residues. A PH domain is found at 182–282 (YLVYNGDLVE…WLEVLEETKR (101 aa)). The interval 285 to 322 (SEKRRREQEEAAAPRGPPQVTPKASNPFEDEDDDEPTV) is disordered. A compositionally biased stretch (acidic residues) spans 312-322 (FEDEDDDEPTV).

Belongs to the EXO84 family. In terms of assembly, the exocyst complex is composed of EXOC1, EXOC2, EXOC3, EXOC4, EXOC5, EXOC6, EXOC7 and EXOC8. Interacts (via PH domain) with GTP-bound RALA and RALB. Interacts with SH3BP1; required for the localization of both SH3BP1 and the exocyst to the leading edge of migrating cells.

The protein localises to the cytoplasm. The protein resides in the perinuclear region. Its subcellular location is the cell projection. It localises to the growth cone. Its function is as follows. Component of the exocyst complex involved in the docking of exocytic vesicles with fusion sites on the plasma membrane. The protein is Exocyst complex component 8 (EXOC8) of Bos taurus (Bovine).